Consider the following 425-residue polypeptide: Serine hydroxymethyltransferase (425 aa).

(6S)-5,6,7,8-tetrahydrofolate contacts are provided by residues Leu-124 and Gly-128–Leu-130. Lys-233 carries the N6-(pyridoxal phosphate)lysine modification.

It belongs to the SHMT family. As to quaternary structure, homodimer. Pyridoxal 5'-phosphate serves as cofactor.

The protein localises to the cytoplasm. The enzyme catalyses (6R)-5,10-methylene-5,6,7,8-tetrahydrofolate + glycine + H2O = (6S)-5,6,7,8-tetrahydrofolate + L-serine. Its pathway is one-carbon metabolism; tetrahydrofolate interconversion. The protein operates within amino-acid biosynthesis; glycine biosynthesis; glycine from L-serine: step 1/1. Catalyzes the reversible interconversion of serine and glycine with tetrahydrofolate (THF) serving as the one-carbon carrier. This reaction serves as the major source of one-carbon groups required for the biosynthesis of purines, thymidylate, methionine, and other important biomolecules. Also exhibits THF-independent aldolase activity toward beta-hydroxyamino acids, producing glycine and aldehydes, via a retro-aldol mechanism. The sequence is that of Serine hydroxymethyltransferase from Clavibacter michiganensis subsp. michiganensis (strain NCPPB 382).